The sequence spans 466 residues: 3-isopropylmalate dehydratase large subunit (466 aa).

Residues C347, C407, and C410 each coordinate [4Fe-4S] cluster.

It belongs to the aconitase/IPM isomerase family. LeuC type 1 subfamily. Heterodimer of LeuC and LeuD. [4Fe-4S] cluster serves as cofactor.

It carries out the reaction (2R,3S)-3-isopropylmalate = (2S)-2-isopropylmalate. It functions in the pathway amino-acid biosynthesis; L-leucine biosynthesis; L-leucine from 3-methyl-2-oxobutanoate: step 2/4. Its function is as follows. Catalyzes the isomerization between 2-isopropylmalate and 3-isopropylmalate, via the formation of 2-isopropylmaleate. This Salmonella paratyphi A (strain ATCC 9150 / SARB42) protein is 3-isopropylmalate dehydratase large subunit.